The sequence spans 75 residues: Small ribosomal subunit protein bS18 (75 aa).

This sequence belongs to the bacterial ribosomal protein bS18 family. In terms of assembly, part of the 30S ribosomal subunit. Forms a tight heterodimer with protein bS6.

Binds as a heterodimer with protein bS6 to the central domain of the 16S rRNA, where it helps stabilize the platform of the 30S subunit. The sequence is that of Small ribosomal subunit protein bS18 from Paracoccus denitrificans (strain Pd 1222).